The primary structure comprises 226 residues: RLA class II histocompatibility antigen, DP alpha-1 chain (226 aa).

Over 1–189 (EHVSVFVIFA…PIQMPETTET (189 aa)) the chain is Extracellular. N-linked (GlcNAc...) asparagine glycans are attached at residues asparagine 75 and asparagine 115. The Ig-like C1-type domain maps to 84 to 176 (PEVIVFPKEP…LDAPLLTHWE (93 aa)). A disulfide bridge connects residues cysteine 104 and cysteine 160. Residues 190-210 (VVCALGLVVGLAGVVVGIVLI) form a helical membrane-spanning segment. Topologically, residues 211–226 (TKALRSSPDPRARRPL) are cytoplasmic.

The protein belongs to the MHC class II family.

The protein localises to the membrane. This chain is RLA class II histocompatibility antigen, DP alpha-1 chain, found in Oryctolagus cuniculus (Rabbit).